The sequence spans 207 residues: Large ribosomal subunit protein uL4 (207 aa).

The tract at residues 50–76 is disordered; sequence KTKTVSEVSGTTKKPFKQKGTGNARQG.

This sequence belongs to the universal ribosomal protein uL4 family. In terms of assembly, part of the 50S ribosomal subunit.

Its function is as follows. One of the primary rRNA binding proteins, this protein initially binds near the 5'-end of the 23S rRNA. It is important during the early stages of 50S assembly. It makes multiple contacts with different domains of the 23S rRNA in the assembled 50S subunit and ribosome. In terms of biological role, forms part of the polypeptide exit tunnel. The sequence is that of Large ribosomal subunit protein uL4 from Rickettsia canadensis (strain McKiel).